A 247-amino-acid chain; its full sequence is Cell division protein ZapD (247 aa).

It belongs to the ZapD family. In terms of assembly, interacts with FtsZ.

The protein localises to the cytoplasm. In terms of biological role, cell division factor that enhances FtsZ-ring assembly. Directly interacts with FtsZ and promotes bundling of FtsZ protofilaments, with a reduction in FtsZ GTPase activity. In Salmonella dublin (strain CT_02021853), this protein is Cell division protein ZapD.